Reading from the N-terminus, the 457-residue chain is Siroheme synthase (457 aa).

Positions 1–204 (MDHLPIFCQL…NDQKAITETT (204 aa)) are precorrin-2 dehydrogenase /sirohydrochlorin ferrochelatase. Residues 22 to 23 (DV) and 43 to 44 (LA) contribute to the NAD(+) site. At Ser-128 the chain carries Phosphoserine. Residues 216–457 (GEVVLVGAGP…RDKLNWFSNH (242 aa)) form a uroporphyrinogen-III C-methyltransferase region. Pro-225 is a binding site for S-adenosyl-L-methionine. Asp-248 (proton acceptor) is an active-site residue. The active-site Proton donor is Lys-270. S-adenosyl-L-methionine-binding positions include 301-303 (GGD), Ile-306, 331-332 (TA), Met-382, and Gly-411.

It in the N-terminal section; belongs to the precorrin-2 dehydrogenase / sirohydrochlorin ferrochelatase family. The protein in the C-terminal section; belongs to the precorrin methyltransferase family.

The enzyme catalyses uroporphyrinogen III + 2 S-adenosyl-L-methionine = precorrin-2 + 2 S-adenosyl-L-homocysteine + H(+). It catalyses the reaction precorrin-2 + NAD(+) = sirohydrochlorin + NADH + 2 H(+). The catalysed reaction is siroheme + 2 H(+) = sirohydrochlorin + Fe(2+). It functions in the pathway cofactor biosynthesis; adenosylcobalamin biosynthesis; precorrin-2 from uroporphyrinogen III: step 1/1. It participates in cofactor biosynthesis; adenosylcobalamin biosynthesis; sirohydrochlorin from precorrin-2: step 1/1. Its pathway is porphyrin-containing compound metabolism; siroheme biosynthesis; precorrin-2 from uroporphyrinogen III: step 1/1. The protein operates within porphyrin-containing compound metabolism; siroheme biosynthesis; siroheme from sirohydrochlorin: step 1/1. It functions in the pathway porphyrin-containing compound metabolism; siroheme biosynthesis; sirohydrochlorin from precorrin-2: step 1/1. Functionally, multifunctional enzyme that catalyzes the SAM-dependent methylations of uroporphyrinogen III at position C-2 and C-7 to form precorrin-2 via precorrin-1. Then it catalyzes the NAD-dependent ring dehydrogenation of precorrin-2 to yield sirohydrochlorin. Finally, it catalyzes the ferrochelation of sirohydrochlorin to yield siroheme. This Shigella flexneri protein is Siroheme synthase.